The chain runs to 562 residues: Solute carrier family 22 member 6 (562 aa).

The Cytoplasmic segment spans residues 1–15 (MPFSELLEQVGSTGR). A helical transmembrane segment spans residues 16-36 (FQVLHVTLLCIPVLMMASHNL). Residues 37–147 (LQNFVATVPS…LVCDMHSFKQ (111 aa)) lie on the Extracellular side of the membrane. A helical transmembrane segment spans residues 148–168 (MGQTIYMGGVLVGALLFGGLS). Over 169 to 174 (DRYGRR) the chain is Cytoplasmic. The helical transmembrane segment at 175–195 (ILLLISNLLMAVSGTCAAFSS) threads the bilayer. Topologically, residues 196 to 205 (SFSLFCVFRF) are extracellular. The helical transmembrane segment at 206-226 (GCGLALSGLGLNTFSLIVEWI) threads the bilayer. The Cytoplasmic portion of the chain corresponds to 227–235 (PTRIRTAVG). Residues 236–256 (TTTGYCYTLGQLILVLLAYFI) traverse the membrane as a helical segment. Residues 257 to 260 (RDWR) are Extracellular-facing. The chain crosses the membrane as a helical span at residues 261–281 (WLTLAVSLPFYVFFLIAWWFH). Over 282 to 351 (ESSRWLALSN…FNTPAMRKRT (70 aa)) the chain is Cytoplasmic. The chain crosses the membrane as a helical span at residues 352-372 (LCLSAVWLSTSFAYYGLAMDL). Over 373-378 (DKFGVD) the chain is Extracellular. The helical transmembrane segment at 379–399 (IYLIQVIFGAVDIPAKVVVVV) threads the bilayer. At 400 to 408 (SMSLIGRRR) the chain is on the cytoplasmic side. A helical membrane pass occupies residues 409-429 (SQCAVLVVAGITILLNLLVPY). Residues 430 to 444 (DKQTIRTCLAVLGKG) lie on the Extracellular side of the membrane. The helical transmembrane segment at 445 to 465 (CLAASFNCCYLYSGELFPTII) threads the bilayer. Residues 466–468 (RQN) are Cytoplasmic-facing. Residues 469-489 (GMGWVSMMARIGAMVAPMVLL) form a helical membrane-spanning segment. Over 490–495 (TRDYIP) the chain is Extracellular. The helical transmembrane segment at 496–516 (WLPGLIYGGAPILSGLAAIFL) threads the bilayer. Over 517–562 (PETLGYPLPDTIQDVEESGSGRKSKMSTKETITLQDKQANLLKQSA) the chain is Cytoplasmic.

This sequence belongs to the major facilitator (TC 2.A.1) superfamily. Organic cation transporter (TC 2.A.1.19) family. Glycosylated. Glycosylation is necessary for proper targeting of the transporter to the plasma membrane.

Its subcellular location is the cell membrane. The protein resides in the basolateral cell membrane. It localises to the basal cell membrane. Its function is as follows. Involved in the renal elimination of endogenous and exogenous organic anions. Functions as organic anion exchanger when the uptake of one molecule of organic anion is coupled with an efflux of one molecule of endogenous dicarboxylic acid (glutarate, ketoglutarate, etc). Mediates the sodium-independent uptake of p-aminohippurate (PAH), 2,3-dimercapto-1-propanesulfonic acid (DMPS), cidofovir, adefovir, 9-(2-phosphonylmethoxyethyl) guanine (PMEG), 9-(2-phosphonylmethoxyethyl) diaminopurine (PMEDAP), ochratoxin (OTA), acyclovir (ACV), 3'-azido-3-'deoxythymidine (AZT), cimetidine (CMD), 2,4-dichloro-phenoxyacetate (2,4-D), hippurate (HA), indoleacetate (IA), indoxyl sulfate (IS), 3-carboxy-4-methyl-5-propyl-2-furanpropionate (CMPF) and edaravone sulfate. Mediates the sodium-independent uptake of p-aminohippurate (PAH). PAH uptake is inhibited by p-chloromercuribenzenesulphonate (PCMBS), diethyl pyrocarbonate (DEPC), indomethacin, sulindac, diclofenac, carprofen, okadaic acid, benzothiazolylcysteine (BTC), S-chlorotrifluoroethylcysteine (CTFC), cysteine S-conjugates S-dichlorovinylcysteine (DCVC), furosemide, steviol, phorbol 12-myristate 13-acetate (PMA), calcium ionophore A23187, benzylpenicillin, bumetamide, losartan, probenecid, phenol red, urate, glutarate and alpha-ketoglutarate. PAH uptake is inhibited by glutarate. The polypeptide is Solute carrier family 22 member 6 (SLC22A6) (Pseudopleuronectes americanus (Winter flounder)).